A 504-amino-acid polypeptide reads, in one-letter code: Catalase (504 aa).

Residues 1-21 (MQMSKSFLLITVGLASTSLQA) form the signal peptide. Residues His72 and Asn145 contribute to the active site. Tyr353 lines the heme pocket.

The protein belongs to the catalase family. It depends on heme as a cofactor.

Its subcellular location is the periplasm. The enzyme catalyses 2 H2O2 = O2 + 2 H2O. Functionally, decomposes hydrogen peroxide into water and oxygen; serves to protect cells from the toxic effects of hydrogen peroxide. The polypeptide is Catalase (Vibrio parahaemolyticus serotype O3:K6 (strain RIMD 2210633)).